Consider the following 244-residue polypeptide: 1-(5-phosphoribosyl)-5-[(5-phosphoribosylamino)methylideneamino] imidazole-4-carboxamide isomerase (244 aa).

The active-site Proton acceptor is the aspartate 10. The active-site Proton donor is aspartate 132.

This sequence belongs to the HisA/HisF family.

Its subcellular location is the cytoplasm. The catalysed reaction is 1-(5-phospho-beta-D-ribosyl)-5-[(5-phospho-beta-D-ribosylamino)methylideneamino]imidazole-4-carboxamide = 5-[(5-phospho-1-deoxy-D-ribulos-1-ylimino)methylamino]-1-(5-phospho-beta-D-ribosyl)imidazole-4-carboxamide. It functions in the pathway amino-acid biosynthesis; L-histidine biosynthesis; L-histidine from 5-phospho-alpha-D-ribose 1-diphosphate: step 4/9. In Xanthomonas campestris pv. campestris (strain 8004), this protein is 1-(5-phosphoribosyl)-5-[(5-phosphoribosylamino)methylideneamino] imidazole-4-carboxamide isomerase.